The chain runs to 285 residues: NADH-dependent oxidoreductase ucdB (285 aa).

Residue Thr-87 participates in NAD(+) binding. Lys-156 is an active-site residue.

Belongs to the HIBADH-related family. NP60 subfamily.

It functions in the pathway secondary metabolite biosynthesis. Its function is as follows. Nonribosomal peptide synthetase that mediates the biosynthesis of usterphenyllins and uscandidusins, p-terphenyl derivatives. Within the pathway, ucdB alone catalyzes both reduction and dehydration of atromentin to form a terphenyl triol intermediate. The pathway begin with the biosynthesis of 4-hydroxyphenylpyruvate (HPPA) from L-tyrosine, possibly by the aminotransferase ucdG. The nonribosomal peptide synthetase ucdA then condenses two HPPA units to produce atromentin. The key step in this pathway is the reduction and dehydration of atromentin to form a terphenyl triol intermediate, performed by the NAD-dependent dehydrogenase ucdB. Further O-methylation by the methyltransferase ucdC forms terphenyllin carrying two methoxy moieties at C-9 and C-12, and subsequent dihydroxylation at C-3 of ring A and C-15 of ring C by the flavin-dependent oxygenase ucdD leads to 3,15-dihydroxyterphenyllin. Prenylation by ucdE at position C-5 of ring A forms usterphenyllin B, and is followed by a second prenylation at position C-14 of ring C to form usterphenyllin A. The following furan ring formation that leads to uscandidusins A and B was proven to be an unexpected spontaneous non-enzymatic reaction. The protein is NADH-dependent oxidoreductase ucdB of Aspergillus ustus.